A 70-amino-acid polypeptide reads, in one-letter code: Small ribosomal subunit protein bS21 (70 aa).

This sequence belongs to the bacterial ribosomal protein bS21 family.

This is Small ribosomal subunit protein bS21 from Polynucleobacter asymbioticus (strain DSM 18221 / CIP 109841 / QLW-P1DMWA-1) (Polynucleobacter necessarius subsp. asymbioticus).